We begin with the raw amino-acid sequence, 328 residues long: Aspartate carbamoyltransferase catalytic subunit (328 aa).

Carbamoyl phosphate-binding residues include R70 and T71. K98 serves as a coordination point for L-aspartate. Positions 120, 150, and 153 each coordinate carbamoyl phosphate. 2 residues coordinate L-aspartate: R183 and R238. The carbamoyl phosphate site is built by G279 and P280.

This sequence belongs to the aspartate/ornithine carbamoyltransferase superfamily. ATCase family. As to quaternary structure, heterododecamer (2C3:3R2) of six catalytic PyrB chains organized as two trimers (C3), and six regulatory PyrI chains organized as three dimers (R2).

The enzyme catalyses carbamoyl phosphate + L-aspartate = N-carbamoyl-L-aspartate + phosphate + H(+). It functions in the pathway pyrimidine metabolism; UMP biosynthesis via de novo pathway; (S)-dihydroorotate from bicarbonate: step 2/3. Catalyzes the condensation of carbamoyl phosphate and aspartate to form carbamoyl aspartate and inorganic phosphate, the committed step in the de novo pyrimidine nucleotide biosynthesis pathway. This chain is Aspartate carbamoyltransferase catalytic subunit, found in Methylococcus capsulatus (strain ATCC 33009 / NCIMB 11132 / Bath).